The primary structure comprises 459 residues: Hepatocyte nuclear factor 3-beta (459 aa).

Positions 14–93 (DWSSYYAEPE…AGAMAGMSGS (80 aa)) are transactivation domain 1. Residues 106–113 (LSPSLSPL) carry the Nuclear localization signal motif. Residue threonine 156 is modified to Phosphothreonine. The segment at residues 159–252 (KPPYSYISLI…FENGCYLRRQ (94 aa)) is a DNA-binding region (fork-head). Residue serine 212 is modified to Phosphoserine. Low complexity predominate over residues 268–281 (GAASSGGKKTAPGS). A disordered region spans residues 268 to 366 (GAASSGGKKT…PGLPPEAHLK (99 aa)). Position 284 is a phosphoserine (serine 284). Over residues 295–311 (ASETPAGTESPHSSASP) the composition is skewed to polar residues. Phosphothreonine is present on threonine 302. A phosphoserine mark is found at serine 304, serine 307, serine 308, and serine 310. Residues 340–353 (PGQQQQAAAHLLGP) are compositionally biased toward low complexity. The tract at residues 362–459 (EAHLKPEHHY…VYSRPIMNSS (98 aa)) is transactivation domain 2. Phosphoserine is present on residues serine 438 and serine 459.

In terms of assembly, binds DNA as a monomer. Binds TLE1. Interacts with FOXA1 and FOXA3. Interacts with PRKDC. Interacts with AKT1. Interacts with TET1; this interaction may recruit TET1 to specific genomic loci to mediate their demethylation. Phosphorylation on Thr-156 abolishes binding to target promoters and subsequent transcription activation upon insulin stimulation. As to expression, restricted mainly to endoderm-derived tissues (lung, liver, stomach, and small intestine). Expressed in epididymis with region-specific expression pattern: no expression is observed in initial segment, low expression in proximal caput, gradiently higher levels of expression in middle and distal caput and highest level in corpus and cauda (at protein level).

The protein localises to the nucleus. It localises to the cytoplasm. Functionally, transcription factor that is involved in embryonic development, establishment of tissue-specific gene expression and regulation of gene expression in differentiated tissues. Is thought to act as a 'pioneer' factor opening the compacted chromatin for other proteins through interactions with nucleosomal core histones and thereby replacing linker histones at target enhancer and/or promoter sites. Binds DNA with the consensus sequence 5'-[AC]A[AT]T[AG]TT[GT][AG][CT]T[CT]-3'. In embryonic development is required for notochord formation. Involved in the development of multiple endoderm-derived organ systems such as the liver, pancreas and lungs; Foxa1 and Foxa2 seem to have at least in part redundant roles. FOXA1 and FOXA2 are essential for hepatic specification. FOXA1 and FOXA2 are required for morphogenesis and cell differentiation during formation of the lung. FOXA1 and FOXA2 are involved in bile duct formation; they positively regulate the binding glucocorticoid receptor/NR3C1 to the IL6 promoter. FOXA1 and FOXA2 regulate multiple phases of midbrain dopaminergic neuron development; they regulate expression of NEUROG2 at the beginning of mDA neurogenesis and of NR4A2 and EN1 in immature mDA neurons. Modulates the transcriptional activity of nuclear hormone receptors; inhibits AR-mediated transcription from the LCN5 promoter. Binds to fibrinogen beta promoter and is involved in IL6-induced fibrinogen beta transcriptional activation. Originally described as a transcription activator for a number of liver genes such as AFP, albumin, tyrosine aminotransferase, PEPCK, etc. Interacts with the cis-acting regulatory regions of these genes. Involved in glucose homeostasis; regulates the expression of genes important for glucose sensing in pancreatic beta-cells and glucose homeostasis. In pancreatic beta cells activates transcription of potassium channel subunits KCNJ11 and ABCC8. Involved in regulation of fat metabolism; activates transcriptional programs of lipid metabolism and ketogenesis at low insulin state. Involved in transcriptional regulation of MUC2 in the intestine. This chain is Hepatocyte nuclear factor 3-beta (Foxa2), found in Mus musculus (Mouse).